The primary structure comprises 147 residues: Large ribosomal subunit protein uL15 (147 aa).

A compositionally biased stretch (basic and acidic residues) spans 1-12; the sequence is MTLRLNDLKPAD. Residues 1–61 are disordered; the sequence is MTLRLNDLKP…GFEGGQTPMQ (61 aa). Residues 23-33 are compositionally biased toward gly residues; it reads RGIGSGLGKTA. The segment covering 34–47 has biased composition (basic residues); it reads GRGHKGSFARKGGG.

It belongs to the universal ribosomal protein uL15 family. Part of the 50S ribosomal subunit.

Functionally, binds to the 23S rRNA. This Xanthomonas oryzae pv. oryzae (strain MAFF 311018) protein is Large ribosomal subunit protein uL15.